We begin with the raw amino-acid sequence, 283 residues long: Pantothenate synthetase (283 aa).

30–37 (MGALHEGH) provides a ligand contact to ATP. Catalysis depends on histidine 37, which acts as the Proton donor. Position 61 (glutamine 61) interacts with (R)-pantoate. Glutamine 61 is a beta-alanine binding site. Residue 147–150 (GEKD) participates in ATP binding. Glutamine 153 lines the (R)-pantoate pocket. Residues valine 176 and 184–187 (VSSR) each bind ATP.

This sequence belongs to the pantothenate synthetase family. In terms of assembly, homodimer.

It is found in the cytoplasm. The catalysed reaction is (R)-pantoate + beta-alanine + ATP = (R)-pantothenate + AMP + diphosphate + H(+). The protein operates within cofactor biosynthesis; (R)-pantothenate biosynthesis; (R)-pantothenate from (R)-pantoate and beta-alanine: step 1/1. Catalyzes the condensation of pantoate with beta-alanine in an ATP-dependent reaction via a pantoyl-adenylate intermediate. The protein is Pantothenate synthetase of Chlorobium luteolum (strain DSM 273 / BCRC 81028 / 2530) (Pelodictyon luteolum).